We begin with the raw amino-acid sequence, 42 residues long: Delta-hexatoxin-Hv1b (42 aa).

Disulfide bonds link Cys1/Cys15, Cys8/Cys20, Cys14/Cys31, and Cys16/Cys42.

It belongs to the neurotoxin 06 (delta-actx) family. As to expression, expressed by the venom gland.

The protein resides in the secreted. Its function is as follows. Lethal neurotoxin. Slows the inactivation of tetrodotoxin-sensitive voltage-gated sodium channels (Nav) by binding to site 3 of the channel, resulting in repetitive firing in autonomic and motor nerve fibers. This Hadronyche versuta (Blue mountains funnel-web spider) protein is Delta-hexatoxin-Hv1b.